The primary structure comprises 951 residues: Leucine-rich repeat-containing G-protein coupled receptor 4 (951 aa).

Positions 1–24 are cleaved as a signal peptide; sequence MPGPLRLLCFFALGLLGSAGPSGA. The 33-residue stretch at 25–57 folds into the LRRNT domain; it reads APPLCAAPCSCDGDRRVDCSGKGLTAVPEGLSA. The Extracellular segment spans residues 25–544; sequence APPLCAAPCS…LLGSWMIRLT (520 aa). Disulfide bonds link cysteine 29-cysteine 35 and cysteine 33-cysteine 43. LRR repeat units lie at residues 58–79, 82–103, 106–127, 130–151, 154–177, 178–199, 202–223, 226–247, 249–270, 273–294, 320–341, 344–365, 366–387, 390–411, and 414–435; these read FTQA…AFKN, FLEE…ALSG, ELKV…AIRG, ALQS…SFEG, QLRH…SNLP, TLQA…AFTN, SLVV…CFDG, NLET…IKAL, SLKE…AFAG, LLRT…AFHN, HLES…LCQN, MLRT…NGCR, ALEE…TFQG, SLRI…AFAK, and TITN…GLNG. An N-linked (GlcNAc...) asparagine glycan is attached at asparagine 68. Residues asparagine 188 and asparagine 199 are each glycosylated (N-linked (GlcNAc...) asparagine). N-linked (GlcNAc...) asparagine glycosylation occurs at asparagine 294. Residues cysteine 339 and cysteine 364 are joined by a disulfide bond. 2 disulfides stabilise this stretch: cysteine 470-cysteine 522 and cysteine 471-cysteine 476. The tract at residues 487-512 is disordered; sequence NSPQDHSVTKEKGATDAANATSTAES. Over residues 501-510 the composition is skewed to low complexity; the sequence is TDAANATSTA. N-linked (GlcNAc...) asparagine glycosylation is present at asparagine 505. The helical transmembrane segment at 545–565 threads the bilayer; it reads VWFIFLVALLFNLLVILTVFA. Topologically, residues 566 to 575 are cytoplasmic; the sequence is SCSSLPASKL. A helical membrane pass occupies residues 576-596; that stretch reads FIGLISVSNLLMGIYTGILTF. The Extracellular segment spans residues 597 to 619; that stretch reads LDAVSWGRFAEFGIWWETGSGCK. Residues cysteine 618 and cysteine 693 are joined by a disulfide bond. A helical transmembrane segment spans residues 620 to 640; the sequence is VAGSLAVFSSESAVFLLTLAA. Residues 641-661 lie on the Cytoplasmic side of the membrane; that stretch reads VERSVFAKDVMKNGKSSHLRQ. A helical membrane pass occupies residues 662–682; sequence FQVAALVALLGAAIAGCFPLF. Residues 683–703 lie on the Extracellular side of the membrane; sequence HGGQYSASPLCLPFPTGETPS. The helical transmembrane segment at 704–724 threads the bilayer; the sequence is LGFTVTLVLLNSLAFLLMAII. The Cytoplasmic portion of the chain corresponds to 725-756; sequence YTKLYCNLEKEDPSENSQSSMIKHVAWLIFTN. A helical transmembrane segment spans residues 757–777; the sequence is CIFFCPVAFFSFAPLITAISI. The Extracellular portion of the chain corresponds to 778–783; it reads SPEIMK. Residues 784–804 form a helical membrane-spanning segment; sequence SVTLIFFPLPACLNPVLYVFF. The Cytoplasmic segment spans residues 805-951; the sequence is NPKFKDDWKL…YAYNLPRVRD (147 aa). Serine 920 is subject to Phosphoserine.

Belongs to the G-protein coupled receptor 1 family.

The protein resides in the cell membrane. In terms of biological role, receptor for R-spondins that potentiates the canonical Wnt signaling pathway and is involved in the formation of various organs. Upon binding to R-spondins (RSPO1, RSPO2, RSPO3 or RSPO4), associates with phosphorylated LRP6 and frizzled receptors that are activated by extracellular Wnt receptors, triggering the canonical Wnt signaling pathway to increase expression of target genes. In contrast to classical G-protein coupled receptors, does not activate heterotrimeric G-proteins to transduce the signal. Its function as activator of the Wnt signaling pathway is required for the development of various organs, including liver, kidney, intestine, bone, reproductive tract and eye. May also act as a receptor for norrin (NDP), such results however require additional confirmation in vivo. Required during spermatogenesis to activate the Wnt signaling pathway in peritubular myoid cells. Required for the maintenance of intestinal stem cells and Paneth cell differentiation in postnatal intestinal crypts. Acts as a regulator of bone formation and remodeling. Involved in kidney development; required for maintaining the ureteric bud in an undifferentiated state. Involved in the development of the anterior segment of the eye. Required during erythropoiesis. Also acts as a negative regulator of innate immunity by inhibiting TLR2/TLR4 associated pattern-recognition and pro-inflammatory cytokine production. Plays an important role in regulating the circadian rhythms of plasma lipids, partially through regulating the rhythmic expression of MTTP. Required for proper development of GnRH neurons (gonadotropin-releasing hormone expressing neurons) that control the release of reproductive hormones from the pituitary gland. This Mus musculus (Mouse) protein is Leucine-rich repeat-containing G-protein coupled receptor 4 (Lgr4).